The following is a 516-amino-acid chain: Alstonine synthase (516 aa).

Residues 6-26 form a helical membrane-spanning segment; it reads NFSLTSPIFLLLSSLFLIILL. Cysteine 453 serves as a coordination point for heme.

The protein belongs to the cytochrome P450 family. Requires heme as cofactor. In terms of tissue distribution, highly expressed in stems. Expressed at low levels in roots.

The protein localises to the endoplasmic reticulum membrane. The catalysed reaction is tetrahydroalstonine + A + reduced [NADPH--hemoprotein reductase] + O2 = alstonine + AH2 + oxidized [NADPH--hemoprotein reductase] + 2 H2O + H(+). It catalyses the reaction ajmalicine + A + reduced [NADPH--hemoprotein reductase] + O2 = serpentine + AH2 + oxidized [NADPH--hemoprotein reductase] + 2 H2O + H(+). The protein operates within alkaloid biosynthesis. In terms of biological role, involved in monoterpene indole alkaloids (MIAs) biosynthesis. Converts by aromatization the tetrahydro-beta-carboline alkaloids tetrahydroalstonine and ajmalicine to the corresponding beta-carboline alkaloids alstonine and serpentine, respectively. In Catharanthus roseus (Madagascar periwinkle), this protein is Alstonine synthase.